Consider the following 34-residue polypeptide: uncharacterized protein (34 aa).

Residues 10–30 (LIITSSFFAIAVVLVLSVLLI) form a helical membrane-spanning segment.

It localises to the membrane. This is an uncharacterized protein from Escherichia coli O157:H7.